Here is a 1342-residue protein sequence, read N- to C-terminus: DNA-directed RNA polymerase subunit beta (1342 aa).

Belongs to the RNA polymerase beta chain family. In terms of assembly, the RNAP catalytic core consists of 2 alpha, 1 beta, 1 beta' and 1 omega subunit. When a sigma factor is associated with the core the holoenzyme is formed, which can initiate transcription.

The enzyme catalyses RNA(n) + a ribonucleoside 5'-triphosphate = RNA(n+1) + diphosphate. Functionally, DNA-dependent RNA polymerase catalyzes the transcription of DNA into RNA using the four ribonucleoside triphosphates as substrates. The chain is DNA-directed RNA polymerase subunit beta from Salmonella choleraesuis (strain SC-B67).